Consider the following 402-residue polypeptide: Iripin-8 (402 aa).

The signal sequence occupies residues 1-16; it reads MTRLLWLFAAITASLA. Asn-164 and Asn-230 each carry an N-linked (GlcNAc...) asparagine glycan.

It belongs to the serpin family. In terms of assembly, interacts with host thrombin/F2. Interacts with host coagulation factor VII/F7 (activated). Interacts with host coagulation factor X/F10 (activated). Interacts with host coagulation factor XII/F12 (activated). Interacts with host coagulation factor IX/F9 (activated). Interacts with host plasmin/PLG. Interacts with host protein C/PROC (activated). Saliva (at protein level). Salivary gland. Midgut. Low-level expression in ovary.

The protein localises to the secreted. In terms of biological role, serine protease inhibitor that modulates blood feeding of ticks on vertebrate species. Inhibits the intrinsic and common pathways of blood coagulation in the host. Inhibits host thrombin, factor VIIa, factor Xa, factor XIa, factor XIIa, plasmin and activated protein C. Inhibits host trypsin and kallikrein. Reduces host complement activity. Does not affect proliferation of CD4+ T-cells and neutrophil migration. In Ixodes ricinus (Common tick), this protein is Iripin-8.